A 122-amino-acid chain; its full sequence is Large ribosomal subunit protein uL14 (122 aa).

Belongs to the universal ribosomal protein uL14 family. Part of the 50S ribosomal subunit. Forms a cluster with proteins L3 and L19. In the 70S ribosome, L14 and L19 interact and together make contacts with the 16S rRNA in bridges B5 and B8.

Binds to 23S rRNA. Forms part of two intersubunit bridges in the 70S ribosome. The polypeptide is Large ribosomal subunit protein uL14 (Chlorobium luteolum (strain DSM 273 / BCRC 81028 / 2530) (Pelodictyon luteolum)).